A 161-amino-acid polypeptide reads, in one-letter code: Peroxynitrite isomerase 2 (161 aa).

The GXWXGXG motif lies at 17-23; the sequence is GTWTGRG. Position 152 (His152) interacts with heme b.

It belongs to the nitrobindin family. Homodimer. Heme b is required as a cofactor.

The enzyme catalyses peroxynitrite = nitrate. It functions in the pathway nitrogen metabolism. Functionally, heme-binding protein able to scavenge peroxynitrite and to protect free L-tyrosine against peroxynitrite-mediated nitration, by acting as a peroxynitrite isomerase that converts peroxynitrite to nitrate. Therefore, this protein likely plays a role in peroxynitrite sensing and in the detoxification of reactive nitrogen and oxygen species (RNS and ROS, respectively). Is able to bind nitric oxide (NO) in vitro, but may act as a sensor of peroxynitrite levels in vivo. This Mycobacterium avium (strain 104) protein is Peroxynitrite isomerase 2.